A 994-amino-acid polypeptide reads, in one-letter code: Translocase of chloroplast 108, chloroplastic (994 aa).

3 disordered regions span residues 14 to 61 (KEAS…EDEP), 84 to 124 (TTDL…DPSV), and 152 to 287 (AVDG…DETR). Polar residues-rich tracts occupy residues 37-53 (GETT…ANES) and 84-98 (TTDL…TPSN). Residues 99-121 (AEKESPEATEVRIVEEGKLEKAD) show a composition bias toward basic and acidic residues. Acidic residues predominate over residues 166–197 (NDGDTDANTADEDNENDEDDVDEDEDEDDADM). A compositionally biased stretch (polar residues) spans 249–268 (ASDSPGRNTQRPNGALSTQI). Low complexity predominate over residues 269–280 (TSTTDESASSDA). Positions 360–589 (DFACTILVLG…KLQETTAPGR (230 aa)) constitute an AIG1-type G domain. Positions 369-376 (GKTGVGKS) are G1. A GTP-binding site is contributed by 372 to 377 (GVGKSS). Mg(2+) is bound at residue Ser376. The interval 395 to 399 (PSTNK) is G2. The tract at residues 416–419 (DTPG) is G3. The tract at residues 488–491 (THAS) is G4. Residues His489 and 537 to 538 (EN) contribute to the GTP site. The G5 stretch occupies residues 537–539 (ENH). Disordered regions lie at residues 616 to 659 (LPDE…EDLT) and 691 to 716 (EAKK…EAGN). Positions 620 to 643 (QAGESDESDDDEEEEDSDADDYDE) are enriched in acidic residues. Positions 650 to 659 (LSKEELEDLT) are enriched in basic and acidic residues. The segment covering 705–714 (AEAEEAEDEA) has biased composition (acidic residues). Residues 969–989 (MVLIGIVPILRSLINCRFGFG) form a helical membrane-spanning segment.

The protein belongs to the TRAFAC class TrmE-Era-EngA-EngB-Septin-like GTPase superfamily. AIG1/Toc34/Toc159-like paraseptin GTPase family. TOC159 subfamily. As to quaternary structure, part of the TOC core complex. The cofactor is Mg(2+).

The protein localises to the plastid. The protein resides in the chloroplast outer membrane. GTPase involved in protein precursor import into chloroplasts. Seems to recognize chloroplast-destined precursor proteins and regulate their presentation to the translocation channel through GTP hydrolysis. Probably specialized in the import of nuclear encoded non-photosynthetic preproteins from the cytoplasm to the chloroplast. This chain is Translocase of chloroplast 108, chloroplastic, found in Physcomitrium patens (Spreading-leaved earth moss).